A 428-amino-acid chain; its full sequence is Kynureninase (428 aa).

Pyridoxal 5'-phosphate-binding positions include threonine 104, threonine 105, 132–135, aspartate 213, histidine 216, and tyrosine 238; that span reads FPSD. Lysine 239 carries the post-translational modification N6-(pyridoxal phosphate)lysine. Pyridoxal 5'-phosphate is bound by residues tryptophan 267 and threonine 295.

This sequence belongs to the kynureninase family. As to quaternary structure, homodimer. It depends on pyridoxal 5'-phosphate as a cofactor.

The enzyme catalyses L-kynurenine + H2O = anthranilate + L-alanine + H(+). It catalyses the reaction 3-hydroxy-L-kynurenine + H2O = 3-hydroxyanthranilate + L-alanine + H(+). The protein operates within amino-acid degradation; L-kynurenine degradation; L-alanine and anthranilate from L-kynurenine: step 1/1. It functions in the pathway cofactor biosynthesis; NAD(+) biosynthesis; quinolinate from L-kynurenine: step 2/3. Its function is as follows. Catalyzes the cleavage of L-kynurenine (L-Kyn) and L-3-hydroxykynurenine (L-3OHKyn) into anthranilic acid (AA) and 3-hydroxyanthranilic acid (3-OHAA), respectively. This Bacillus cereus (strain ATCC 10987 / NRS 248) protein is Kynureninase.